The chain runs to 100 residues: uncharacterized protein (100 aa).

Positions 1-26 are cleaved as a signal peptide; that stretch reads MKRLLVSLRVWMVFLMNWVTPDRKTA.

This is an uncharacterized protein from Bacillus subtilis (strain 168).